Here is a 433-residue protein sequence, read N- to C-terminus: Homoserine dehydrogenase (433 aa).

2 residues coordinate NADPH: Thr13 and Val14. Positions 14 and 33 each coordinate NAD(+). Val14 lines the NADP(+) pocket. Residues Lys45 and Lys105 each coordinate NADPH. Residues Lys45 and Lys105 each coordinate NADP(+). Na(+) is bound by residues Glu129, Val132, Gly134, and Ile136. Positions 187 and 190 each coordinate NADP(+). Residues Glu190 and Asp201 each coordinate L-homoserine. Catalysis depends on Lys205, which acts as the Proton donor. Gly302 provides a ligand contact to NADPH. Residue Gly302 participates in NAD(+) binding. Gly302 is an NADP(+) binding site. Residues 350–426 form the ACT domain; the sequence is FLRIHVKDEV…VVQEVKSTYR (77 aa).

This sequence belongs to the homoserine dehydrogenase family. As to quaternary structure, homotetramer. A metal cation is required as a cofactor.

The protein resides in the cytoplasm. It is found in the secreted. It carries out the reaction L-homoserine + NADP(+) = L-aspartate 4-semialdehyde + NADPH + H(+). The protein operates within amino-acid biosynthesis; L-methionine biosynthesis via de novo pathway; L-homoserine from L-aspartate: step 3/3. Its pathway is amino-acid biosynthesis; L-threonine biosynthesis; L-threonine from L-aspartate: step 3/5. Its activity is regulated as follows. Feedback inhibition by threonine. Activated by sodium ions. In terms of biological role, catalyzes the conversion of L-aspartate-beta-semialdehyde (L-Asa) to L-homoserine (L-Hse), the third step in the biosynthesis of threonine and methionine from aspartate. Utilizes NADPH but not NADH as coenzyme. In Bacillus subtilis (strain 168), this protein is Homoserine dehydrogenase (hom).